Consider the following 166-residue polypeptide: Urease accessory protein UreE (166 aa).

Residues 135 to 156 (EQGAYGGGHHHSHHGDEEFNYG) are disordered.

The protein belongs to the UreE family.

It localises to the cytoplasm. Involved in urease metallocenter assembly. Binds nickel. Probably functions as a nickel donor during metallocenter assembly. In Ectopseudomonas mendocina (strain ymp) (Pseudomonas mendocina), this protein is Urease accessory protein UreE.